Here is a 292-residue protein sequence, read N- to C-terminus: Imipenem-hydrolyzing beta-lactamase (292 aa).

Residues 1-27 (MSLNVKQSRIAILFSSCLISISFFSQA) form the signal peptide. A disulfide bridge connects residues C70 and C240. Residue S71 is the Acyl-ester intermediate of the active site. 236–238 (KTG) is a substrate binding site.

The protein belongs to the class-A beta-lactamase family.

It carries out the reaction a beta-lactam + H2O = a substituted beta-amino acid. Its function is as follows. Hydrolyzes carbapenems such as imipenem, which are extended-spectrum beta-lactam antibiotics. This Enterobacter cloacae protein is Imipenem-hydrolyzing beta-lactamase (nmcA).